Reading from the N-terminus, the 291-residue chain is Beta-lactamase OXY-1 (291 aa).

A signal peptide spans 1-24; that stretch reads MLKSSWRKTALMAAAAVPLLLASG. Ser73 functions as the Acyl-ester intermediate in the catalytic mechanism. A substrate-binding site is contributed by 237 to 239; that stretch reads KTG.

This sequence belongs to the class-A beta-lactamase family.

The enzyme catalyses a beta-lactam + H2O = a substituted beta-amino acid. Its function is as follows. Hydrolyzes broad-spectrum beta-lactam antibiotics. Active against cephalosporins. The sequence is that of Beta-lactamase OXY-1 (bla) from Klebsiella oxytoca.